The primary structure comprises 87 residues: Small ribosomal subunit protein uS15c (87 aa).

It belongs to the universal ribosomal protein uS15 family. As to quaternary structure, part of the 30S ribosomal subunit.

It localises to the plastid. It is found in the chloroplast. This Illicium oligandrum (Star anise) protein is Small ribosomal subunit protein uS15c (rps15).